We begin with the raw amino-acid sequence, 395 residues long: Secreted aspartyl protease 1 (395 aa).

Residues methionine 1 to alanine 20 form the signal peptide. Residues serine 21 to arginine 88 constitute a propeptide, removed in mature form. N-linked (GlcNAc...) asparagine glycosylation is present at asparagine 41. A Peptidase A1 domain is found at tryptophan 105–alanine 391. Active-site residues include aspartate 121 and aspartate 283. Residues cysteine 321 and cysteine 352 are joined by a disulfide bond.

This sequence belongs to the peptidase A1 family.

It localises to the secreted. Inhibited by pepstatin A. In terms of biological role, dominant secreted aspartyl protease that has a clear preference for aromatic residues in the P1' position directly adjacent to the cleavage site and, in particular, Trp. In addition, it generally cleaves peptides containing Lys, Arg, Phe, Tyr, or Nle (norleucine) in the P1 position, Nle and Glu at P2, and Arg and Val at P2'. Has important roles in facilitating the interaction of the yeast with the external environment. Is able to rapidly hydrolyze Staphylococcus aureus protein A, an important S.aureus virulence factor involved in immune evasion and biofilm formation. Shows anti-biofilm properties and thus plays a role in inter-kingdom interactions, beneficial for host skin health. The protein is Secreted aspartyl protease 1 of Malassezia globosa (strain ATCC MYA-4612 / CBS 7966) (Dandruff-associated fungus).